We begin with the raw amino-acid sequence, 461 residues long: Ubiquinone hydroxylase UbiM (461 aa).

It belongs to the UbiH/COQ6 family. Requires FAD as cofactor.

The enzyme catalyses a 2-(all-trans-polyprenyl)phenol + NADPH + O2 + H(+) = a 3-(all-trans-polyprenyl)benzene-1,2-diol + NADP(+) + H2O. The catalysed reaction is a 5-methoxy-2-methyl-3-(all-trans-polyprenyl)benzene-1,4-diol + AH2 + O2 = a 3-demethylubiquinol + A + H2O. It functions in the pathway cofactor biosynthesis; ubiquinone biosynthesis. Its function is as follows. Catalyzes the hydroxylation of three positions of the aromatic ring during ubiquinone biosynthesis. This is Ubiquinone hydroxylase UbiM from Neisseria meningitidis serogroup C / serotype 2a (strain ATCC 700532 / DSM 15464 / FAM18).